The chain runs to 671 residues: DNA ligase (671 aa).

Residues 35-39 (DQQYD), 84-85 (SL), and glutamate 113 contribute to the NAD(+) site. The active-site N6-AMP-lysine intermediate is lysine 115. NAD(+)-binding residues include arginine 136, glutamate 170, lysine 285, and lysine 309. Zn(2+) is bound by residues cysteine 403, cysteine 406, cysteine 421, and cysteine 426. One can recognise a BRCT domain in the interval 588–671 (TTQTIFTNKK…QIIENSQIKL (84 aa)).

It belongs to the NAD-dependent DNA ligase family. LigA subfamily. Requires Mg(2+) as cofactor. It depends on Mn(2+) as a cofactor.

It carries out the reaction NAD(+) + (deoxyribonucleotide)n-3'-hydroxyl + 5'-phospho-(deoxyribonucleotide)m = (deoxyribonucleotide)n+m + AMP + beta-nicotinamide D-nucleotide.. Functionally, DNA ligase that catalyzes the formation of phosphodiester linkages between 5'-phosphoryl and 3'-hydroxyl groups in double-stranded DNA using NAD as a coenzyme and as the energy source for the reaction. It is essential for DNA replication and repair of damaged DNA. In Onion yellows phytoplasma (strain OY-M), this protein is DNA ligase.